Here is a 1687-residue protein sequence, read N- to C-terminus: A-kinase anchor protein 12 (1687 aa).

The segment at 1–108 (MGAGSSTEQR…EKDRVEEMAA (108 aa)) is disordered. Residue Gly-2 is the site of N-myristoyl glycine attachment. Residues Ser-11, Ser-18, Ser-22, and Ser-27 each carry the phosphoserine modification. Residues 30–48 (GPAAEASGAAGDPADADPA) are compositionally biased toward low complexity. Residues 52 to 62 (PQKNGQLSTVN) show a composition bias toward polar residues. Over residues 75–88 (ENQEGQEEEVVDED) the composition is skewed to acidic residues. Over residues 89–105 (VGQRESEDVREKDRVEE) the composition is skewed to basic and acidic residues. Ser-136 and Ser-204 each carry phosphoserine. Disordered regions lie at residues 175–282 (SDTV…ETTS) and 298–355 (KTSF…DYEK). The span at 213-230 (ASKESELKQSTEKQEGTL) shows a compositional bias: basic and acidic residues. Residues Ser-235 and Ser-245 each carry the phosphoserine modification. Over residues 247–259 (QAAEEEAKDEGEE) the composition is skewed to acidic residues. The interval 254 to 544 (KDEGEEKQEK…QHIHTESPES (291 aa)) is involved in PKC-binding. A phosphoserine mark is found at Ser-268, Ser-271, Ser-274, and Ser-304. The segment covering 268–282 (SPESPSSPVSSETTS) has biased composition (low complexity). The segment covering 303–321 (KSKEDDLETAEKRKEQEAE) has biased composition (basic and acidic residues). Thr-331 bears the Phosphothreonine mark. Positions 334–344 (ASEEQEPAEDT) are enriched in acidic residues. Ser-335 and Ser-350 each carry phosphoserine. At Tyr-353 the chain carries Phosphotyrosine. Position 371 is a phosphoserine (Ser-371). The tract at residues 402–481 (VEKTEEEQGG…EKTLPKHPEG (80 aa)) is disordered. Low complexity predominate over residues 417–426 (GGVVVEGTGE). Ser-469 carries the phosphoserine modification. Positions 470 to 480 (PEEKTLPKHPE) are enriched in basic and acidic residues. A phosphoserine mark is found at Ser-491, Ser-507, and Ser-509. Residues 496–828 (KVQGSPLKKL…INEDDPDVPA (333 aa)) are disordered. Residues 499-513 (GSPLKKLFSSSGLKK) show a composition bias toward low complexity. Basic residues predominate over residues 514–523 (LSGKKQKGKR). The span at 533 to 550 (EYQHIHTESPESADEQKG) shows a compositional bias: basic and acidic residues. 6 positions are modified to phosphoserine: Ser-541, Ser-544, Ser-585, Ser-599, Ser-614, and Ser-616. The AKAP CaM-binding 1 motif lies at 594–614 (ITPWASFKKMVTPKKRVRRPS). A compositionally biased stretch (basic and acidic residues) spans 612–626 (RPSESDKEEELEKVK). Residues 628–639 (ATLSSTDSTVSE) show a composition bias toward polar residues. Residue Thr-629 is modified to Phosphothreonine. Phosphoserine occurs at positions 631, 632, 635, and 638. Basic and acidic residues predominate over residues 642 to 661 (DEVKTVGEEQKPEEPKRRVD). A phosphoserine mark is found at Ser-683, Ser-684, and Ser-685. A compositionally biased stretch (basic and acidic residues) spans 697–711 (DSHRAEEASKDKEAG). Positions 717–726 (ASTQEQDQAQ) are enriched in polar residues. Positions 727–744 (GSSSPEPAGSPSEGEGVS) are enriched in low complexity. Ser-736, Ser-748, Ser-770, Ser-771, and Ser-789 each carry phosphoserine. An AKAP CaM-binding 2 motif is present at residues 743-763 (VSTWESFKRLVTPRKKSKSKL). The short motif at 784 to 804 (EESWVSIKKFIPGRRKKRADG) is the AKAP CaM-binding 3 element. Position 871 is a phosphothreonine (Thr-871). Ser-873 is modified (phosphoserine). Positions 959–981 (ETSEALRTEEVTEASGAEETTDM) are disordered. Lys-1030 participates in a covalent cross-link: Glycyl lysine isopeptide (Lys-Gly) (interchain with G-Cter in SUMO1). Polar residues predominate over residues 1035-1045 (VPATQTVQRTG). Disordered stretches follow at residues 1035-1105 (VPAT…EVTA), 1125-1221 (AVAP…LAAA), 1277-1361 (CQEK…QDKA), and 1443-1487 (TPAP…TAIE). Position 1059 is a phosphoserine (Ser-1059). A compositionally biased stretch (polar residues) spans 1130 to 1157 (SSETLTDSETNGSTPLADSDTADGTQQD). Positions 1199–1211 (QEEHGEEPGRDVL) are enriched in basic and acidic residues. Ser-1289 is subject to Phosphoserine. Over residues 1298–1310 (DVEKEKRETKPEQ) the composition is skewed to basic and acidic residues. A phosphoserine mark is found at Ser-1348, Ser-1352, and Ser-1354. A compositionally biased stretch (basic and acidic residues) spans 1462 to 1487 (QRERSEEEDKPDAGPDADGKESTAIE). Residues 1498 to 1511 (ELESKSNKIVLNVI) are RII-binding. Disordered regions lie at residues 1522 to 1582 (ETAP…GSAS) and 1599 to 1687 (IEKL…LAES). The segment covering 1530-1547 (YDSQTQVPAMQADSQGAQ) has biased composition (polar residues). Phosphoserine occurs at positions 1543 and 1571. The span at 1618–1630 (QLQSLAQAEASAS) shows a compositional bias: low complexity. Ser-1637 carries the phosphoserine modification. Positions 1645-1687 (LTEEGDAPKVEVQEEEMSTKSVKENKAQAEEDLQEPKGDLAES) are enriched in basic and acidic residues.

Binds to dimeric RII-alpha regulatory subunit of PKC. In terms of processing, phosphorylated by PKC (in vitro).

It localises to the cytoplasm. It is found in the cytoskeleton. The protein resides in the membrane. Anchoring protein that mediates the subcellular compartmentation of protein kinase A (PKA) and protein kinase C (PKC). In Rattus norvegicus (Rat), this protein is A-kinase anchor protein 12 (Akap12).